The following is a 407-amino-acid chain: tRNA(Ile2) 2-agmatinylcytidine synthetase TiaS (407 aa).

Belongs to the TiaS family.

The protein localises to the cytoplasm. It carries out the reaction cytidine(34) in tRNA(Ile2) + agmatine + ATP + H2O = 2-agmatinylcytidine(34) in tRNA(Ile2) + AMP + 2 phosphate + 2 H(+). Its function is as follows. ATP-dependent agmatine transferase that catalyzes the formation of 2-agmatinylcytidine (agm2C) at the wobble position (C34) of tRNA(Ile2), converting the codon specificity from AUG to AUA. The sequence is that of tRNA(Ile2) 2-agmatinylcytidine synthetase TiaS from Caldivirga maquilingensis (strain ATCC 700844 / DSM 13496 / JCM 10307 / IC-167).